A 405-amino-acid polypeptide reads, in one-letter code: MTDKLAVNRNTFDQVILPVYAPAQFIPVKGKGSRVWDQQGTEYIDFAGGIAVTALGHCHPALVSALHQQGETLWHTSNVFTNEPALRLAQKLIAATFADRVFFANSGAEANEAAFKLARHYAIERHSPYKTKIIAFHNAFHGRTLFTVSVGGQPKYSDGFGPKPADIIHVPFNDLAAVKAVMDDHTCAVVLEPIQGEGGITSATPEFLQGVRALCDQHNALLVFDEVQSGMGRSGKLFSYMHYGVTPDILTTAKALGGGFPISAMLTTEEIASVMTVGTHGTTYGGNPLACAVAEAALDVINTPEVLNGIEQRHGLFVQALQSINSKYDVFSDIRGMGLLIGAELTAKYRGQAREFLAAAAANGLMILNAGPDVLRLAPSLVIELEDIQQGMARLEKAMASVIKG.

Pyridoxal 5'-phosphate is bound by residues 107 to 108 (GA) and phenylalanine 140. Arginine 143 provides a ligand contact to N(2)-acetyl-L-ornithine. 225-228 (DEVQ) contributes to the pyridoxal 5'-phosphate binding site. Residue lysine 254 is modified to N6-(pyridoxal phosphate)lysine. Threonine 282 serves as a coordination point for N(2)-acetyl-L-ornithine. Residue threonine 283 participates in pyridoxal 5'-phosphate binding.

Belongs to the class-III pyridoxal-phosphate-dependent aminotransferase family. ArgD subfamily. In terms of assembly, homodimer. The cofactor is pyridoxal 5'-phosphate.

Its subcellular location is the cytoplasm. The enzyme catalyses N(2)-acetyl-L-ornithine + 2-oxoglutarate = N-acetyl-L-glutamate 5-semialdehyde + L-glutamate. It catalyses the reaction N-succinyl-(2S,6S)-2,6-diaminopimelate + 2-oxoglutarate = (S)-2-succinylamino-6-oxoheptanedioate + L-glutamate. The protein operates within amino-acid biosynthesis; L-arginine biosynthesis; N(2)-acetyl-L-ornithine from L-glutamate: step 4/4. Its pathway is amino-acid biosynthesis; L-lysine biosynthesis via DAP pathway; LL-2,6-diaminopimelate from (S)-tetrahydrodipicolinate (succinylase route): step 2/3. In terms of biological role, involved in both the arginine and lysine biosynthetic pathways. The chain is Acetylornithine/succinyldiaminopimelate aminotransferase from Yersinia pestis.